A 441-amino-acid polypeptide reads, in one-letter code: Xylose isomerase (441 aa).

Catalysis depends on residues His-100 and Asp-103. Residues Glu-231, Glu-267, His-270, Asp-295, Asp-306, Asp-308, and Asp-338 each contribute to the Mg(2+) site.

This sequence belongs to the xylose isomerase family. Homotetramer. The cofactor is Mg(2+).

The protein resides in the cytoplasm. It carries out the reaction alpha-D-xylose = alpha-D-xylulofuranose. The chain is Xylose isomerase from Paraburkholderia phymatum (strain DSM 17167 / CIP 108236 / LMG 21445 / STM815) (Burkholderia phymatum).